The chain runs to 319 residues: Type II methyltransferase M.RsrI (319 aa).

The segment covering 1 to 10 has biased composition (basic residues); it reads MANRSHHNAG. Residues 1–32 are disordered; that stretch reads MANRSHHNAGHRAMNALRKSGQKHSSESQLGS.

The protein belongs to the N(4)/N(6)-methyltransferase family.

It catalyses the reaction a 2'-deoxyadenosine in DNA + S-adenosyl-L-methionine = an N(6)-methyl-2'-deoxyadenosine in DNA + S-adenosyl-L-homocysteine + H(+). With respect to regulation, strongly inhibited by N-ethylmaleimide, inactivated by MgCl(2) or MgSO(4). Its function is as follows. A beta subtype methylase, recognizes the double-stranded sequence 5'-GAATTC-3', methylates A-3 on both strands, and protects the DNA from cleavage by the RsrI endonuclease. The chain is Type II methyltransferase M.RsrI from Cereibacter sphaeroides (Rhodobacter sphaeroides).